We begin with the raw amino-acid sequence, 87 residues long: MANIKSAKKRAVQSEKRRQHNASQRSMMRTYIKKVYAQVAAGEKSAAEAAFVEMQKVVDRMASKGLIHANKAANHKSKLAAQIKKLA.

Residues 1 to 11 (MANIKSAKKRA) show a composition bias toward basic residues. The disordered stretch occupies residues 1–27 (MANIKSAKKRAVQSEKRRQHNASQRSM).

Belongs to the bacterial ribosomal protein bS20 family.

Its function is as follows. Binds directly to 16S ribosomal RNA. This is Small ribosomal subunit protein bS20 from Haemophilus influenzae (strain PittEE).